A 472-amino-acid chain; its full sequence is UDP-N-acetylmuramate--L-alanine ligase (472 aa).

122–128 (GSHGKTT) is a binding site for ATP.

This sequence belongs to the MurCDEF family.

The protein resides in the cytoplasm. The catalysed reaction is UDP-N-acetyl-alpha-D-muramate + L-alanine + ATP = UDP-N-acetyl-alpha-D-muramoyl-L-alanine + ADP + phosphate + H(+). Its pathway is cell wall biogenesis; peptidoglycan biosynthesis. Its function is as follows. Cell wall formation. The sequence is that of UDP-N-acetylmuramate--L-alanine ligase from Prochlorococcus marinus (strain SARG / CCMP1375 / SS120).